Here is a 373-residue protein sequence, read N- to C-terminus: DNA replication and repair protein RecF (373 aa).

30 to 37 (GPNGQGKT) lines the ATP pocket.

The protein belongs to the RecF family.

The protein localises to the cytoplasm. The RecF protein is involved in DNA metabolism; it is required for DNA replication and normal SOS inducibility. RecF binds preferentially to single-stranded, linear DNA. It also seems to bind ATP. This is DNA replication and repair protein RecF from Streptomyces avermitilis (strain ATCC 31267 / DSM 46492 / JCM 5070 / NBRC 14893 / NCIMB 12804 / NRRL 8165 / MA-4680).